The following is a 194-amino-acid chain: Large ribosomal subunit protein uL10 (194 aa).

Residues 172–187 (EGGAAEAPAEAATEAP) show a composition bias toward low complexity. The disordered stretch occupies residues 172 to 194 (EGGAAEAPAEAATEAPAEAEAES).

The protein belongs to the universal ribosomal protein uL10 family. In terms of assembly, part of the ribosomal stalk of the 50S ribosomal subunit. The N-terminus interacts with L11 and the large rRNA to form the base of the stalk. The C-terminus forms an elongated spine to which L12 dimers bind in a sequential fashion forming a multimeric L10(L12)X complex.

In terms of biological role, forms part of the ribosomal stalk, playing a central role in the interaction of the ribosome with GTP-bound translation factors. The protein is Large ribosomal subunit protein uL10 of Rhodococcus erythropolis (strain PR4 / NBRC 100887).